A 278-amino-acid polypeptide reads, in one-letter code: Digeranylgeranylglyceryl phosphate synthase (278 aa).

8 helical membrane passes run 12-32, 34-54, 91-111, 129-149, 153-173, 204-224, 225-245, and 257-277; these read LKNC…ASYF, LATV…CGFG, LLVF…LMAV, IIGN…GGIA, IDVT…REII, FLLV…FFGI, YYML…YNLV, and SRNI…GSLF.

The protein belongs to the UbiA prenyltransferase family. DGGGP synthase subfamily. The cofactor is Mg(2+).

The protein localises to the cell membrane. It catalyses the reaction sn-3-O-(geranylgeranyl)glycerol 1-phosphate + (2E,6E,10E)-geranylgeranyl diphosphate = 2,3-bis-O-(geranylgeranyl)-sn-glycerol 1-phosphate + diphosphate. Its pathway is membrane lipid metabolism; glycerophospholipid metabolism. Functionally, prenyltransferase that catalyzes the transfer of the geranylgeranyl moiety of geranylgeranyl diphosphate (GGPP) to the C2 hydroxyl of (S)-3-O-geranylgeranylglyceryl phosphate (GGGP). This reaction is the second ether-bond-formation step in the biosynthesis of archaeal membrane lipids. The sequence is that of Digeranylgeranylglyceryl phosphate synthase from Methanococcus maripaludis (strain C7 / ATCC BAA-1331).